Here is a 282-residue protein sequence, read N- to C-terminus: Acetyl-coenzyme A carboxylase carboxyl transferase subunit beta (282 aa).

The CoA carboxyltransferase N-terminal domain maps to 29 to 282 (LPINCPSCSA…LSSLLGLHQG (254 aa)). The Zn(2+) site is built by Cys33, Cys36, Cys52, and Cys55. Residues 33–55 (CPSCSARIAAEALQRNLKVCPKC) form a C4-type zinc finger.

It belongs to the AccD/PCCB family. In terms of assembly, acetyl-CoA carboxylase is a heterohexamer composed of biotin carboxyl carrier protein (AccB), biotin carboxylase (AccC) and two subunits each of ACCase subunit alpha (AccA) and ACCase subunit beta (AccD). Zn(2+) is required as a cofactor.

Its subcellular location is the cytoplasm. It catalyses the reaction N(6)-carboxybiotinyl-L-lysyl-[protein] + acetyl-CoA = N(6)-biotinyl-L-lysyl-[protein] + malonyl-CoA. Its pathway is lipid metabolism; malonyl-CoA biosynthesis; malonyl-CoA from acetyl-CoA: step 1/1. Component of the acetyl coenzyme A carboxylase (ACC) complex. Biotin carboxylase (BC) catalyzes the carboxylation of biotin on its carrier protein (BCCP) and then the CO(2) group is transferred by the transcarboxylase to acetyl-CoA to form malonyl-CoA. The sequence is that of Acetyl-coenzyme A carboxylase carboxyl transferase subunit beta from Syntrophomonas wolfei subsp. wolfei (strain DSM 2245B / Goettingen).